The following is a 69-amino-acid chain: Fungal defensin oryzeasin (69 aa).

The N-terminal stretch at 1 to 18 (MKLLTVAFSLLLLGQVHA) is a signal peptide. The propeptide occupies 19–26 (SPLVLDKR). 3 disulfide bridges follow: C29–C60, C44–C66, and C48–C68.

Belongs to the invertebrate defensin family.

The protein localises to the secreted. Its subcellular location is the target cell membrane. In terms of biological role, shows antibacterial activity against numerous Gram-positive bacteria. It selectively inhibits peptidoglycan biosynthesis through complex formation with the cell wall precursor lipid II (1:1 molar ratio) thus inhibiting cell wall synthesis. The sequence is that of Fungal defensin oryzeasin from Aspergillus oryzae (strain ATCC 42149 / RIB 40) (Yellow koji mold).